We begin with the raw amino-acid sequence, 206 residues long: Transcription factor BTF3 (206 aa).

The disordered stretch occupies residues 1-42; it reads MRRTGAPAQADSRGRGRARGGCPGGEATLSQPPPRGGTRGQE. Arginine 19 carries the post-translational modification Omega-N-methylarginine. Serine 30 carries the phosphoserine modification. N6-methyllysine is present on residues lysine 46 and lysine 54. The NAC-A/B domain occupies 82 to 147; that stretch reads TADDKKLQFS…AETKQLTEML (66 aa). At threonine 160 the chain carries Phosphothreonine. The tract at residues 170 to 206 is disordered; that stretch reads PKQSVDGKAPLATGEDDDDEVPDLVENFDEASKNEAN. Serine 173 is subject to Phosphoserine. A compositionally biased stretch (acidic residues) spans 183–198; sequence GEDDDDEVPDLVENFD.

This sequence belongs to the NAC-beta family. Part of the nascent polypeptide-associated complex (NAC), which is a heterodimer of NACA and BTF3 (via NAC-A/B domains). NAC associates with ribosomes through the BTF3/NACB subunit. Both subunits can contact nascent polypeptide chains.

The protein resides in the cytoplasm. It localises to the nucleus. When associated with NACA, prevents inappropriate targeting of non-secretory polypeptides to the endoplasmic reticulum (ER). Binds to nascent polypeptide chains as they emerge from the ribosome and blocks their interaction with the signal recognition particle (SRP), which normally targets nascent secretory peptides to the ER. BTF3 is also a general transcription factor that can form a stable complex with RNA polymerase II. Required for the initiation of transcription. In Homo sapiens (Human), this protein is Transcription factor BTF3 (BTF3).